A 357-amino-acid chain; its full sequence is H-2 class I histocompatibility antigen, D-37 alpha chain (357 aa).

Positions 1–20 are cleaved as a signal peptide; sequence MLLFAHLLQLLVSATVPTQS. Residues 21–110 are alpha-1; sequence SPHSLRYFTT…LLGYYNQSND (90 aa). Over 21-304 the chain is Extracellular; the sequence is SPHSLRYFTT…EPPPSTVSNM (284 aa). N106 is a glycosylation site (N-linked (GlcNAc...) asparagine). The alpha-2 stretch occupies residues 111-202; that stretch reads ESHTLQWMYG…RLGNETLQRS (92 aa). C121 and C184 are oxidised to a cystine. Residue N196 is glycosylated (N-linked (GlcNAc...) asparagine). Residues 203-294 form an alpha-3 region; the sequence is DPPKAHVTHH…GLPEPLTLRW (92 aa). The 89-residue stretch at 205-293 folds into the Ig-like C1-type domain; it reads PKAHVTHHPR…EGLPEPLTLR (89 aa). A disulfide bridge connects residues C223 and C279. The connecting peptide stretch occupies residues 295 to 304; the sequence is EPPPSTVSNM. The helical transmembrane segment at 305–327 threads the bilayer; it reads VIIAVLVVLGAVIILGAVVAFVM. Residues 328-357 lie on the Cytoplasmic side of the membrane; it reads KRRRHIGVKGCYAHVLGSKSFQTSDWPQKA. Residue S347 is modified to Phosphoserine.

It belongs to the MHC class I family. In terms of assembly, heterodimer of an alpha chain and a beta chain (beta-2-microglobulin).

The protein resides in the membrane. Its function is as follows. Involved in the presentation of foreign antigens to the immune system. This is H-2 class I histocompatibility antigen, D-37 alpha chain (H2-T23) from Mus musculus (Mouse).